The sequence spans 151 residues: Transcriptional regulator MraZ (151 aa).

SpoVT-AbrB domains follow at residues 5–52 and 81–124; these read ATAV…PLDE and ATEC…SDVE.

The protein belongs to the MraZ family. In terms of assembly, forms oligomers.

It localises to the cytoplasm. It is found in the nucleoid. This is Transcriptional regulator MraZ from Haemophilus influenzae (strain 86-028NP).